A 1919-amino-acid polypeptide reads, in one-letter code: Protein TIC 214 (1919 aa).

The next 6 membrane-spanning stretches (helical) occupy residues 18–38 (IINSVVVVGLYYGFLTTFSIG), 67–87 (FITGQLMMFISIYYAPLHLAL), 90–110 (PHTITVLALPYLLFHFFWNNH), 127–147 (LSIQCVFLNNLIFQLFNHFIL), 175–195 (VGWLIGHILFMKWVGLVLVWI), and 224–244 (IFSILLFITCVYYLGRIPSPI). Disordered stretches follow at residues 250 to 375 (KETP…GKEK), 1107 to 1129 (IKSITKEKKKGTPGIKSSPNKRS), and 1606 to 1636 (ELKNRNQEEKEPADRGDLGSDAQNQGNRRFV). Composition is skewed to acidic residues over residues 259 to 269 (GESEEETDVEI), 278 to 288 (GESEEETDVEI), 297 to 307 (GESEEETDVEI), 316 to 328 (GESEEETDVEIET), and 355 to 366 (EKEDPDKIDETE). Over residues 1107-1117 (IKSITKEKKKG) the composition is skewed to basic residues. A compositionally biased stretch (basic and acidic residues) spans 1606 to 1623 (ELKNRNQEEKEPADRGDL). The span at 1626 to 1636 (DAQNQGNRRFV) shows a compositional bias: polar residues.

This sequence belongs to the TIC214 family. As to quaternary structure, part of the Tic complex.

It localises to the plastid. The protein resides in the chloroplast inner membrane. Its function is as follows. Involved in protein precursor import into chloroplasts. May be part of an intermediate translocation complex acting as a protein-conducting channel at the inner envelope. The protein is Protein TIC 214 of Panax ginseng (Korean ginseng).